We begin with the raw amino-acid sequence, 442 residues long: MASSAHSDSASSDAPAELPAEILAAAPWSAPADDSEHLRITAVRTFLTAPQGCPYVIVRVETNQPGLYGLGCASDPQRTLAIRSVVDDYYAPMLLGRDPADIEDLHRLLFNSGYWRGGSIGQNALAGVDVALWDIKGKVAGLPLHQLLGGRAREAAEAYTHVDGDNAGEIAEKVLAAHERGYRHVRVQVSVPGTDTYGTAPRDAAEARRRELRAGSWDSLAYLRHVPPVLREIRERVGTGVELLHDAHERLTPSQARELVHEVEDARLFFLEDALAPEDAAHFDQLRAAGSVPLAVGELYHDVMMYLPLLQRQVIDFARIRVPTLGGLTPTRKLVAAVELFGARTAPHGPGDVSPVGMAANLGLDLSSPAFGVQEAATFREPTREVFPGTPVPERGRFHGSDRPGLGVDFDEVAARKYPVPEPLRHDRWALLRNGDGSVQRP.

Position 246 (aspartate 246) interacts with Mg(2+). Histidine 248 contacts D-arabinonate. Mg(2+) is bound by residues glutamate 272 and glutamate 298. D-arabinonate is bound by residues glutamate 298, arginine 319, histidine 348, and glutamate 375.

It belongs to the mandelate racemase/muconate lactonizing enzyme family. GalD subfamily.

Functionally, has no detectable activity with D-mannonate and with a panel of 70 other acid sugars (in vitro), in spite of the conservation of the residues that are expected to be important for catalytic activity and cofactor binding. May have evolved a divergent function. This Streptomyces sp. (strain SPB074) protein is D-galactonate dehydratase family member SSBG_02010.